We begin with the raw amino-acid sequence, 244 residues long: Phosphoadenosine 5'-phosphosulfate reductase (244 aa).

Cys-239 acts as the Nucleophile; cysteine thiosulfonate intermediate in catalysis.

It belongs to the PAPS reductase family. CysH subfamily.

It is found in the cytoplasm. It catalyses the reaction [thioredoxin]-disulfide + sulfite + adenosine 3',5'-bisphosphate + 2 H(+) = [thioredoxin]-dithiol + 3'-phosphoadenylyl sulfate. It participates in sulfur metabolism; hydrogen sulfide biosynthesis; sulfite from sulfate: step 3/3. Its function is as follows. Catalyzes the formation of sulfite from phosphoadenosine 5'-phosphosulfate (PAPS) using thioredoxin as an electron donor. The polypeptide is Phosphoadenosine 5'-phosphosulfate reductase (Klebsiella pneumoniae subsp. pneumoniae (strain ATCC 700721 / MGH 78578)).